Consider the following 73-residue polypeptide: MAKKEDTLVLEGKVEELLPGMHFRVILENGMPVTAHLCGKMRMSNIRLLVGDRVTVEMSAYDLTKARVVYRHR.

The S1-like domain occupies 1 to 73; sequence MAKKEDTLVL…TKARVVYRHR (73 aa).

Belongs to the IF-1 family. Component of the 30S ribosomal translation pre-initiation complex which assembles on the 30S ribosome in the order IF-2 and IF-3, IF-1 and N-formylmethionyl-tRNA(fMet); mRNA recruitment can occur at any time during PIC assembly.

It is found in the cytoplasm. In terms of biological role, one of the essential components for the initiation of protein synthesis. Stabilizes the binding of IF-2 and IF-3 on the 30S subunit to which N-formylmethionyl-tRNA(fMet) subsequently binds. Helps modulate mRNA selection, yielding the 30S pre-initiation complex (PIC). Upon addition of the 50S ribosomal subunit IF-1, IF-2 and IF-3 are released leaving the mature 70S translation initiation complex. The chain is Translation initiation factor IF-1 from Chlamydia pneumoniae (Chlamydophila pneumoniae).